The primary structure comprises 435 residues: DEAD-box ATP-dependent RNA helicase CshB (435 aa).

The short motif at 5–33 (SRFDQFGFQPFIGLAIDKLGFYEPTEVQQ) is the Q motif element. In terms of domain architecture, Helicase ATP-binding spans 36-208 (IPGILKGESI…SKYMENPRYE (173 aa)). 49-56 (SQTGTGKT) contacts ATP. Residues 156–159 (DEAD) carry the DEAD box motif. The 144-residue stretch at 235 to 378 (LLKNVLVGSQ…HVDWKNKEFV (144 aa)) folds into the Helicase C-terminal domain. The disordered stretch occupies residues 383–435 (RNRRAKREAKRETADPREIGMRKKAKQKGKPNYKKKINYKMNEIKRRERRKKR). The segment covering 391 to 403 (AKRETADPREIGM) has biased composition (basic and acidic residues). The span at 404-420 (RKKAKQKGKPNYKKKIN) shows a compositional bias: basic residues.

This sequence belongs to the DEAD box helicase family. CshB subfamily.

The protein resides in the cytoplasm. The enzyme catalyses ATP + H2O = ADP + phosphate + H(+). Its function is as follows. DEAD-box RNA helicase involved in cold tolerance, motility, and tolerance to heat, alkali and oxidative stress. This Listeria monocytogenes serovar 1/2a (strain ATCC BAA-679 / EGD-e) protein is DEAD-box ATP-dependent RNA helicase CshB.